We begin with the raw amino-acid sequence, 517 residues long: Diacylglycerol O-acyltransferase 1C (517 aa).

The disordered stretch occupies residues 1–82; sequence MAISDVPAAA…NVGAAANDAG (82 aa). Residues 8–17 show a composition bias toward low complexity; it reads AAAGTTATTT. The segment covering 53 to 64 has biased composition (basic and acidic residues); that stretch reads ITDDDNIKDHKP. The span at 71–81 shows a compositional bias: low complexity; sequence DDNVGAAANDA. Helical transmembrane passes span 121–141, 165–185, 197–217, 222–242, 272–292, 305–325, and 361–381; these read HAGLFNLCIVVLVAVNSRLII, WPLFMCCLSLAIFPLAAFVVE, VVVLLHLIISTVELCYPVLVI, SAFVSGVTLMLLTCIVWLKLV, YPYTVTFRSLAYFMVAPTLCY, GWVFRQLVKLIIFTGVMGFII, and VWLCMFYCFFHLWLNILAELV. The short motif at 388 to 394 is the FYXDWWN motif element; it reads FYKDWWN. 3 consecutive transmembrane segments (helical) span residues 429-449, 451-471, and 484-504; these read GAASLIAFLVSAVFHELCIAV, CHMFKLWAFIGIMFQVPLVLI, and VGNMIFWFIFCILGQPMSVLL. His443 is a catalytic residue.

This sequence belongs to the membrane-bound acyltransferase family. Sterol o-acyltransferase subfamily.

It is found in the endoplasmic reticulum membrane. It catalyses the reaction an acyl-CoA + a 1,2-diacyl-sn-glycerol = a triacyl-sn-glycerol + CoA. The protein operates within glycerolipid metabolism; triacylglycerol biosynthesis. Involved in triacylglycerol (TAG) synthesis. Catalyzes the acylation of the sn-3 hydroxy group of sn-1,2-diacylglycerol using acyl-CoA. The polypeptide is Diacylglycerol O-acyltransferase 1C (Glycine max (Soybean)).